Consider the following 373-residue polypeptide: Probable G-protein coupled receptor 173 (373 aa).

The Extracellular segment spans residues 1–26 (MANTTGEPEEVSGALSPPSASAYVKL). Asn-3 carries an N-linked (GlcNAc...) asparagine glycan. A helical transmembrane segment spans residues 27-47 (VLLGLIMCVSLAGNAILSLLV). Over 48–59 (LKERALHKAPYY) the chain is Cytoplasmic. The chain crosses the membrane as a helical span at residues 60 to 80 (FLLDLCLADGIRSAVCFPFVL). The Extracellular segment spans residues 81-97 (ASVRHGSSWTFSALSCK). Cys-96 and Cys-174 form a disulfide bridge. Residues 98–118 (IVAFMAVLFCFHAAFMLFCIS) traverse the membrane as a helical segment. At 119-139 (VTRYMAIAHHRFYAKRMTLWT) the chain is on the cytoplasmic side. Residues 140 to 160 (CAAVICMAWTLSVAMAFPPVF) traverse the membrane as a helical segment. At 161 to 188 (DVGTYKFIREEDQCIFEHRYFKANDTLG) the chain is on the extracellular side. Asn-184 is a glycosylation site (N-linked (GlcNAc...) asparagine). A helical membrane pass occupies residues 189–209 (FMLMLAVLMAATHAVYGKLLL). The Cytoplasmic segment spans residues 210–287 (FEYRHRKMKP…VKGEKQLGRM (78 aa)). The helical transmembrane segment at 288-308 (FYAITLLFLLLWSPYIVACYW) threads the bilayer. The Extracellular segment spans residues 309 to 322 (RVFVKACAVPHRYL). Residues 323 to 343 (ATAVWMSFAQAAVNPIVCFLL) form a helical membrane-spanning segment. At 344 to 373 (NKDLKKCLRTHAPCWGTGGAPAPREPYCVM) the chain is on the cytoplasmic side.

The protein belongs to the G-protein coupled receptor 1 family. Expressed in the ovary, specifically in granulosa cells of follicles that have passed the primary stage and in oocytes (at protein level). Expressed at high levels in brain. Lower levels in small intestine. In brain regions, detected in all regions tested. Highest levels in the cerebellum and cerebral cortex.

It localises to the cell membrane. Is a receptor for the SMIM20 derived peptides Phoenixin-14 and Phoenixin-20. It mediates the Phoenixin-14 and Phoenixin-20 augmentation of gonadotropin-releasing hormone (GNRH) signaling in the hypothalamus and pituitary gland. In the ovary, it mediates the effects of Phoenixin-14 and Phoenixin-20 induced granulosa cell proliferation during follicular growth. This chain is Probable G-protein coupled receptor 173 (GPR173), found in Homo sapiens (Human).